The sequence spans 104 residues: Large ribosomal subunit protein bL21 (104 aa).

The protein belongs to the bacterial ribosomal protein bL21 family. As to quaternary structure, part of the 50S ribosomal subunit. Contacts protein L20.

In terms of biological role, this protein binds to 23S rRNA in the presence of protein L20. This is Large ribosomal subunit protein bL21 from Clostridium botulinum (strain Kyoto / Type A2).